The sequence spans 257 residues: 1-(5-phosphoribosyl)-5-[(5-phosphoribosylamino)methylideneamino] imidazole-4-carboxamide isomerase (257 aa).

The active-site Proton acceptor is the Asp-8. The Proton donor role is filled by Asp-129.

Belongs to the HisA/HisF family.

It localises to the cytoplasm. It catalyses the reaction 1-(5-phospho-beta-D-ribosyl)-5-[(5-phospho-beta-D-ribosylamino)methylideneamino]imidazole-4-carboxamide = 5-[(5-phospho-1-deoxy-D-ribulos-1-ylimino)methylamino]-1-(5-phospho-beta-D-ribosyl)imidazole-4-carboxamide. It participates in amino-acid biosynthesis; L-histidine biosynthesis; L-histidine from 5-phospho-alpha-D-ribose 1-diphosphate: step 4/9. The polypeptide is 1-(5-phosphoribosyl)-5-[(5-phosphoribosylamino)methylideneamino] imidazole-4-carboxamide isomerase (Thermosynechococcus vestitus (strain NIES-2133 / IAM M-273 / BP-1)).